The primary structure comprises 71 residues: uncharacterized protein (71 aa).

2 helical membrane-spanning segments follow: residues 9–29 and 41–61; these read FVIF…NINF and FVAL…FFGL.

It localises to the membrane. This is an uncharacterized protein from Acheta domesticus (House cricket).